The primary structure comprises 426 residues: D-tagatose-1,6-bisphosphate aldolase subunit KbaZ (426 aa).

It belongs to the GatZ/KbaZ family. KbaZ subfamily. As to quaternary structure, forms a complex with KbaY.

Its pathway is carbohydrate metabolism; D-tagatose 6-phosphate degradation; D-glyceraldehyde 3-phosphate and glycerone phosphate from D-tagatose 6-phosphate: step 2/2. Functionally, component of the tagatose-1,6-bisphosphate aldolase KbaYZ that is required for full activity and stability of the Y subunit. Could have a chaperone-like function for the proper and stable folding of KbaY. When expressed alone, KbaZ does not show any aldolase activity. The protein is D-tagatose-1,6-bisphosphate aldolase subunit KbaZ of Escherichia coli (strain 55989 / EAEC).